The primary structure comprises 164 residues: Phosphopantetheine adenylyltransferase (164 aa).

Residue serine 10 coordinates substrate. ATP contacts are provided by residues 10–11 and histidine 18; that span reads SF. Substrate-binding residues include lysine 42, leucine 74, and arginine 88. ATP is bound by residues 89 to 91, glutamate 99, and 124 to 130; these read GLR and YAFLSSS.

This sequence belongs to the bacterial CoaD family. Homohexamer. It depends on Mg(2+) as a cofactor.

The protein localises to the cytoplasm. It catalyses the reaction (R)-4'-phosphopantetheine + ATP + H(+) = 3'-dephospho-CoA + diphosphate. The protein operates within cofactor biosynthesis; coenzyme A biosynthesis; CoA from (R)-pantothenate: step 4/5. Reversibly transfers an adenylyl group from ATP to 4'-phosphopantetheine, yielding dephospho-CoA (dPCoA) and pyrophosphate. The polypeptide is Phosphopantetheine adenylyltransferase (Geobacillus thermodenitrificans (strain NG80-2)).